The sequence spans 159 residues: 2-C-methyl-D-erythritol 2,4-cyclodiphosphate synthase (159 aa).

The a divalent metal cation site is built by aspartate 10 and histidine 12. 4-CDP-2-C-methyl-D-erythritol 2-phosphate contacts are provided by residues 10-12 and 36-37; these read DVH and HS. Histidine 44 serves as a coordination point for a divalent metal cation. Residues 58-60, 63-67, 102-108, 134-137, phenylalanine 141, and arginine 144 each bind 4-CDP-2-C-methyl-D-erythritol 2-phosphate; these read DIG, FPDTD, AQAPKMA, and TTTE.

Belongs to the IspF family. Homotrimer. A divalent metal cation serves as cofactor.

It catalyses the reaction 4-CDP-2-C-methyl-D-erythritol 2-phosphate = 2-C-methyl-D-erythritol 2,4-cyclic diphosphate + CMP. It participates in isoprenoid biosynthesis; isopentenyl diphosphate biosynthesis via DXP pathway; isopentenyl diphosphate from 1-deoxy-D-xylulose 5-phosphate: step 4/6. Functionally, involved in the biosynthesis of isopentenyl diphosphate (IPP) and dimethylallyl diphosphate (DMAPP), two major building blocks of isoprenoid compounds. Catalyzes the conversion of 4-diphosphocytidyl-2-C-methyl-D-erythritol 2-phosphate (CDP-ME2P) to 2-C-methyl-D-erythritol 2,4-cyclodiphosphate (ME-CPP) with a corresponding release of cytidine 5-monophosphate (CMP). The polypeptide is 2-C-methyl-D-erythritol 2,4-cyclodiphosphate synthase (Shewanella frigidimarina (strain NCIMB 400)).